Consider the following 184-residue polypeptide: UPF0215 protein MJ1150 (184 aa).

It belongs to the UPF0215 family.

This is UPF0215 protein MJ1150 from Methanocaldococcus jannaschii (strain ATCC 43067 / DSM 2661 / JAL-1 / JCM 10045 / NBRC 100440) (Methanococcus jannaschii).